The primary structure comprises 147 residues: MQNNEIQPSFLIQKVYTKDVSFETINSPACFKEQWNPSSDFNIDINTTKINNENFELDLTITVTTKNNETNVYIAEVTQSGIFTITGMSEEQIDSVLNTYCANTLFPYAKRIIDSSIIKGGFLPLNLAPINFDAIYLQKKSSPKREH.

Belongs to the SecB family. As to quaternary structure, homotetramer, a dimer of dimers. One homotetramer interacts with 1 SecA dimer.

The protein resides in the cytoplasm. Its function is as follows. One of the proteins required for the normal export of preproteins out of the cell cytoplasm. It is a molecular chaperone that binds to a subset of precursor proteins, maintaining them in a translocation-competent state. It also specifically binds to its receptor SecA. The chain is Protein-export protein SecB 2 from Francisella tularensis subsp. novicida (strain U112).